A 489-amino-acid chain; its full sequence is Long chain base biosynthesis protein 2d (489 aa).

A helical transmembrane segment spans residues 4 to 24; sequence LPYVTALTTLFSYGLLFAFGQ. Lysine 311 is subject to N6-(pyridoxal phosphate)lysine.

Belongs to the class-II pyridoxal-phosphate-dependent aminotransferase family. Heterodimer with LCB1. Component of the serine palmitoyltransferase (SPT) complex, composed of LCB1 and LCB2. Pyridoxal 5'-phosphate is required as a cofactor.

The protein localises to the endoplasmic reticulum membrane. It catalyses the reaction L-serine + hexadecanoyl-CoA + H(+) = 3-oxosphinganine + CO2 + CoA. The protein operates within lipid metabolism; sphingolipid metabolism. In terms of biological role, serine palmitoyltransferase (SPT). The heterodimer formed with LCB1 constitutes the catalytic core. This Oryza sativa subsp. japonica (Rice) protein is Long chain base biosynthesis protein 2d.